A 387-amino-acid polypeptide reads, in one-letter code: Formate-dependent phosphoribosylglycinamide formyltransferase (387 aa).

Residues Glu-21–Leu-22 and Glu-81 contribute to the N(1)-(5-phospho-beta-D-ribosyl)glycinamide site. ATP contacts are provided by residues Arg-113, Lys-154, Ser-159 to Gln-164, Glu-193 to Ile-196, and Glu-201. One can recognise an ATP-grasp domain in the interval Thr-118–Leu-306. Mg(2+)-binding residues include Glu-265 and Glu-277. N(1)-(5-phospho-beta-D-ribosyl)glycinamide contacts are provided by residues Asp-284, Lys-352, and Arg-359–Arg-360.

It belongs to the PurK/PurT family. Homodimer.

The catalysed reaction is N(1)-(5-phospho-beta-D-ribosyl)glycinamide + formate + ATP = N(2)-formyl-N(1)-(5-phospho-beta-D-ribosyl)glycinamide + ADP + phosphate + H(+). Its pathway is purine metabolism; IMP biosynthesis via de novo pathway; N(2)-formyl-N(1)-(5-phospho-D-ribosyl)glycinamide from N(1)-(5-phospho-D-ribosyl)glycinamide (formate route): step 1/1. Functionally, involved in the de novo purine biosynthesis. Catalyzes the transfer of formate to 5-phospho-ribosyl-glycinamide (GAR), producing 5-phospho-ribosyl-N-formylglycinamide (FGAR). Formate is provided by PurU via hydrolysis of 10-formyl-tetrahydrofolate. This Wolinella succinogenes (strain ATCC 29543 / DSM 1740 / CCUG 13145 / JCM 31913 / LMG 7466 / NCTC 11488 / FDC 602W) (Vibrio succinogenes) protein is Formate-dependent phosphoribosylglycinamide formyltransferase.